The following is a 380-amino-acid chain: Cytochrome b (380 aa).

The next 4 membrane-spanning stretches (helical) occupy residues 33–53, 77–98, 113–133, and 178–198; these read FGSLLGICLMVQIITGLFLAM, WLIRYMHANGASMFFICLFIHV, WNIGIALFLTTMATAFVGYVL, and FFAFHFILPFIITAFVLVHLL. Heme b-binding residues include H83 and H97. The heme b site is built by H182 and H196. H201 contacts a ubiquinone. Helical transmembrane passes span 226–246, 288–308, 320–340, and 347–367; these read IKDILGILMLLMVLMILVLFF, LGGVTALILSILILAMFPLIN, ITQAMYWIFIANLFILTWIGG, and FTMIGLISSILYFSIIVMFMF.

Belongs to the cytochrome b family. In terms of assembly, the cytochrome bc1 complex contains 11 subunits: 3 respiratory subunits (MT-CYB, CYC1 and UQCRFS1), 2 core proteins (UQCRC1 and UQCRC2) and 6 low-molecular weight proteins (UQCRH/QCR6, UQCRB/QCR7, UQCRQ/QCR8, UQCR10/QCR9, UQCR11/QCR10 and a cleavage product of UQCRFS1). This cytochrome bc1 complex then forms a dimer. The cofactor is heme b.

The protein localises to the mitochondrion inner membrane. Its function is as follows. Component of the ubiquinol-cytochrome c reductase complex (complex III or cytochrome b-c1 complex) that is part of the mitochondrial respiratory chain. The b-c1 complex mediates electron transfer from ubiquinol to cytochrome c. Contributes to the generation of a proton gradient across the mitochondrial membrane that is then used for ATP synthesis. This chain is Cytochrome b (MT-CYB), found in Calomys musculinus (Drylands vesper mouse).